An 85-amino-acid polypeptide reads, in one-letter code: Beta-insect depressant toxin Lqh-dprIT3a (85 aa).

The signal sequence occupies residues 1–21 (MKLLLLLTISASMLIEGLVNA). Positions 22 to 82 (DGYIRGGDGC…EWDYETNTCG (61 aa)) constitute an LCN-type CS-alpha/beta domain. Disulfide bonds link C31–C81, C35–C56, C42–C63, and C46–C65. G82 carries the glycine amide modification.

Belongs to the long (4 C-C) scorpion toxin superfamily. Sodium channel inhibitor family. Beta subfamily. As to expression, expressed by the venom gland.

Its subcellular location is the secreted. Functionally, depressant insect beta-toxins cause a transient contraction paralysis followed by a slow flaccid paralysis. They bind voltage-independently at site-4 of sodium channels (Nav) and block action potentials, primarily by depolarizing the axonal membrane and suppressing the sodium current. This depressant toxin is active only on insects. It is found in a relatively small amount in the venom, and its activity on insects is 10-fold higher compared to other known depressant toxins. The chain is Beta-insect depressant toxin Lqh-dprIT3a from Leiurus hebraeus (Hebrew deathstalker scorpion).